The following is a 221-amino-acid chain: GTP cyclohydrolase III (221 aa).

Belongs to the archaeal-type GTP cyclohydrolase family.

It catalyses the reaction GTP + 3 H2O = 2-amino-5-formylamino-6-(5-phospho-D-ribosylamino)pyrimidin-4(3H)-one + 2 phosphate + 2 H(+). In terms of biological role, catalyzes the formation of 2-amino-5-formylamino-6-ribofuranosylamino-4(3H)-pyrimidinone ribonucleotide monophosphate and inorganic phosphate from GTP. Also has an independent pyrophosphate phosphohydrolase activity. The polypeptide is GTP cyclohydrolase III (Pyrobaculum arsenaticum (strain DSM 13514 / JCM 11321 / PZ6)).